The primary structure comprises 104 residues: Glutaredoxin (104 aa).

The 101-residue stretch at 3-103 (MIKAQELVSS…PLLTEAGAVK (101 aa)) folds into the Glutaredoxin domain. A disulfide bond links cysteine 23 and cysteine 26.

It belongs to the glutaredoxin family. CPYC subfamily.

The protein localises to the cytoplasm. In terms of biological role, has a glutathione-disulfide oxidoreductase activity in the presence of NADPH and glutathione reductase. Reduces low molecular weight disulfides and proteins. The polypeptide is Glutaredoxin (Vernicia fordii (Tung)).